The following is a 234-amino-acid chain: UPF0502 protein Reut_B4455 (234 aa).

It belongs to the UPF0502 family.

The protein is UPF0502 protein Reut_B4455 of Cupriavidus pinatubonensis (strain JMP 134 / LMG 1197) (Cupriavidus necator (strain JMP 134)).